Consider the following 189-residue polypeptide: Interferon alpha-7 (189 aa).

A signal peptide spans 1 to 23 (MARSFSLLMVVLVLSYKSICSLG). 2 disulfides stabilise this stretch: C24-C122 and C52-C162.

The protein belongs to the alpha/beta interferon family.

The protein localises to the secreted. In terms of biological role, produced by macrophages, IFN-alpha have antiviral activities. Interferon stimulates the production of two enzymes: a protein kinase and an oligoadenylate synthetase. This chain is Interferon alpha-7 (IFNA7), found in Homo sapiens (Human).